The chain runs to 361 residues: Chorismate synthase (361 aa).

NADP(+) is bound by residues arginine 48 and arginine 54. FMN-binding positions include 125 to 127 (RSS), 238 to 239 (NA), glycine 278, 293 to 297 (KPTSS), and arginine 319.

Belongs to the chorismate synthase family. In terms of assembly, homotetramer. The cofactor is FMNH2.

The catalysed reaction is 5-O-(1-carboxyvinyl)-3-phosphoshikimate = chorismate + phosphate. Its pathway is metabolic intermediate biosynthesis; chorismate biosynthesis; chorismate from D-erythrose 4-phosphate and phosphoenolpyruvate: step 7/7. Catalyzes the anti-1,4-elimination of the C-3 phosphate and the C-6 proR hydrogen from 5-enolpyruvylshikimate-3-phosphate (EPSP) to yield chorismate, which is the branch point compound that serves as the starting substrate for the three terminal pathways of aromatic amino acid biosynthesis. This reaction introduces a second double bond into the aromatic ring system. The polypeptide is Chorismate synthase (Escherichia coli O157:H7).